The chain runs to 556 residues: Cholesterol oxidase (556 aa).

FAD contacts are provided by Gly-18, Glu-37, Gly-88, Ala-93, and Val-235. The active-site Proton acceptor is His-471. Residue Gly-504 coordinates FAD.

It belongs to the GMC oxidoreductase family. FAD is required as a cofactor.

The enzyme catalyses cholesterol + O2 = cholest-5-en-3-one + H2O2. It catalyses the reaction cholest-5-en-3-one = cholest-4-en-3-one. Its pathway is steroid metabolism; cholesterol degradation. Functionally, bifunctional enzyme that catalyzes the oxidation and isomerization of cholesterol to cholestenone (cholest-4-en-3-one), an initial step in the cholesterol degradation process. The protein is Cholesterol oxidase of Acinetobacter baumannii.